The following is a 167-amino-acid chain: NADH-quinone oxidoreductase subunit B 2 (167 aa).

4 residues coordinate [4Fe-4S] cluster: Cys38, Cys39, Cys104, and Cys133.

The protein belongs to the complex I 20 kDa subunit family. As to quaternary structure, NDH-1 is composed of 14 different subunits. Subunits NuoB, C, D, E, F, and G constitute the peripheral sector of the complex. The cofactor is [4Fe-4S] cluster.

It is found in the cell membrane. It catalyses the reaction a quinone + NADH + 5 H(+)(in) = a quinol + NAD(+) + 4 H(+)(out). In terms of biological role, NDH-1 shuttles electrons from NADH, via FMN and iron-sulfur (Fe-S) centers, to quinones in the respiratory chain. The immediate electron acceptor for the enzyme in this species is believed to be ubiquinone. Couples the redox reaction to proton translocation (for every two electrons transferred, four hydrogen ions are translocated across the cytoplasmic membrane), and thus conserves the redox energy in a proton gradient. This Roseiflexus sp. (strain RS-1) protein is NADH-quinone oxidoreductase subunit B 2.